The chain runs to 688 residues: UvrABC system protein C (688 aa).

In terms of domain architecture, GIY-YIG spans 11 to 90 (LTPGVYLYKD…IKKHRPRYNI (80 aa)). The UVR domain maps to 200-235 (GELVDALRTEMEAASQGLDFERAAVLRDRIRALERT).

This sequence belongs to the UvrC family. In terms of assembly, interacts with UvrB in an incision complex.

It localises to the cytoplasm. Functionally, the UvrABC repair system catalyzes the recognition and processing of DNA lesions. UvrC both incises the 5' and 3' sides of the lesion. The N-terminal half is responsible for the 3' incision and the C-terminal half is responsible for the 5' incision. The protein is UvrABC system protein C of Nitratidesulfovibrio vulgaris (strain ATCC 29579 / DSM 644 / CCUG 34227 / NCIMB 8303 / VKM B-1760 / Hildenborough) (Desulfovibrio vulgaris).